Reading from the N-terminus, the 121-residue chain is Small ribosomal subunit protein uS13 (121 aa).

The segment at 91 to 121 is disordered; sequence HRRGLPVRGQNTKNNARTRKGPSKTVAGKKK. A compositionally biased stretch (basic residues) spans 106–121; that stretch reads ARTRKGPSKTVAGKKK.

It belongs to the universal ribosomal protein uS13 family. Part of the 30S ribosomal subunit. Forms a loose heterodimer with protein S19. Forms two bridges to the 50S subunit in the 70S ribosome.

Its function is as follows. Located at the top of the head of the 30S subunit, it contacts several helices of the 16S rRNA. In the 70S ribosome it contacts the 23S rRNA (bridge B1a) and protein L5 of the 50S subunit (bridge B1b), connecting the 2 subunits; these bridges are implicated in subunit movement. Contacts the tRNAs in the A and P-sites. In Listeria monocytogenes serotype 4b (strain CLIP80459), this protein is Small ribosomal subunit protein uS13.